The following is a 451-amino-acid chain: MLLDEIKNLNFLIMGLGLNGGGVALSRFLLKRGAKLVITDLKSETELALSIDALRDFEDQIRYVLGKHDVNDFKNADIVVKNPGVKPNNKYLKFAKRIETDISLFLMFNKNPIVAVTGTKGKSTLVSLLYQALKEKYPGVKLGGNIGVSPLSFFDQLDGKSPLILELSSWQLQSLENFNPIISIITNVYNDHQNYYLNFDDYIIDKSKIFVNQTSGIVIIQDQAYCKYFSKFKSKVRVILFSEFNPCDFDQDIFYCNEGKVYFNDSLIGSFSNSRAVFIIPKVITFFVSYYLNIDLNRTGQILSNFKGIEHRLEFVKSVQNVMFYNDTASTIPESTVLSVKSLKTKDNRINLIVGGTDKELDFLSFSKIADIVRTWILIRGSATVKIIKILEKSSIQYFLFDSLRDAVNYAFKISSPGDIVLFSPASASFELFNNEFDRGLQFKNLVNNLG.

118–124 (GTKGKST) lines the ATP pocket.

Belongs to the MurCDEF family.

The protein resides in the cytoplasm. It carries out the reaction UDP-N-acetyl-alpha-D-muramoyl-L-alanine + D-glutamate + ATP = UDP-N-acetyl-alpha-D-muramoyl-L-alanyl-D-glutamate + ADP + phosphate + H(+). It participates in cell wall biogenesis; peptidoglycan biosynthesis. Functionally, cell wall formation. Catalyzes the addition of glutamate to the nucleotide precursor UDP-N-acetylmuramoyl-L-alanine (UMA). The chain is UDP-N-acetylmuramoylalanine--D-glutamate ligase (murD) from Borreliella burgdorferi (strain ATCC 35210 / DSM 4680 / CIP 102532 / B31) (Borrelia burgdorferi).